Reading from the N-terminus, the 364-residue chain is Spermidine/putrescine import ATP-binding protein PotA (364 aa).

One can recognise an ABC transporter domain in the interval 5 to 235 (LSFKGVTKGF…PVNRFVADFI (231 aa)). Residue 37–44 (GPSGCGKT) participates in ATP binding.

It belongs to the ABC transporter superfamily. Spermidine/putrescine importer (TC 3.A.1.11.1) family. As to quaternary structure, the complex is composed of two ATP-binding proteins (PotA), two transmembrane proteins (PotB and PotC) and a solute-binding protein (PotD).

Its subcellular location is the cell membrane. It catalyses the reaction ATP + H2O + polyamine-[polyamine-binding protein]Side 1 = ADP + phosphate + polyamineSide 2 + [polyamine-binding protein]Side 1.. Its function is as follows. Part of the ABC transporter complex PotABCD involved in spermidine/putrescine import. Responsible for energy coupling to the transport system. This chain is Spermidine/putrescine import ATP-binding protein PotA, found in Staphylococcus haemolyticus (strain JCSC1435).